The chain runs to 363 residues: tRNA (guanine(26)-N(2))-dimethyltransferase (363 aa).

The Trm1 methyltransferase domain maps to 5–352; that stretch reads VLRREGGVKF…GEYGEVLMAF (348 aa). Residues arginine 40, arginine 67, aspartate 85, aspartate 111, and alanine 112 each contribute to the S-adenosyl-L-methionine site.

The protein belongs to the class I-like SAM-binding methyltransferase superfamily. Trm1 family.

It carries out the reaction guanosine(26) in tRNA + 2 S-adenosyl-L-methionine = N(2)-dimethylguanosine(26) in tRNA + 2 S-adenosyl-L-homocysteine + 2 H(+). Its function is as follows. Dimethylates a single guanine residue at position 26 of a number of tRNAs using S-adenosyl-L-methionine as donor of the methyl groups. The protein is tRNA (guanine(26)-N(2))-dimethyltransferase of Pyrobaculum aerophilum (strain ATCC 51768 / DSM 7523 / JCM 9630 / CIP 104966 / NBRC 100827 / IM2).